We begin with the raw amino-acid sequence, 617 residues long: MEPIPPSNGNKNNSMDKQPQQPQQPQQQQQQQQQQRRDQRNSKLNELNETERVRNRFISHEFHKLDRTKSRIDAPKISFSDSESESDSEFFLAKRNTNNNNQNNTSPTFSSANGKQSNLTQRKINTQIQSKQPTNNNVQPLTDDEGTINHSNHHHHHHNQNNNGNNNNNNNNNNNNNKISTPPKQEEKMTMNGLFTLRPSILSSESNGSSYRGFLNLLLILLITASFRLVILNHLLYGIRINLDLYKISEYHRWPGVMISLMINLFIIAAYLIEKAAAKQLLPDRICYLLRIINCAAVIIVPSGSIIAFSPNPASGIIVMILICTFSMKIISYAYENSKQRKLNPDNKKFVIDPTNTSIYPNNLSLRSTYWFMLVPTLVYQLSYPRSPKIRKGYLLRRIVEALSLSLLILWMVNQYMLPLVQNSIEPLEKIDIVLIVERIMKLSLPNLYVWLLGFYVFFHLYLNIVAEITRFGDREFYRDWWNSTGLDYFWRTWNMPVHHWMVVLIYTPMRRRGFSKNMGYFMCFFVSAIFHELVISIPFHSLKLWGFFGIMSQMVLIALTKNLMNGRNLGNVIFWISIVLGQPLVVLLYYRNFVLENPEWYRNVEPPTSPPVMPFY.

Disordered stretches follow at residues 1 to 52 (MEPI…ETER) and 95 to 186 (RNTN…PKQE). Residues 7-17 (SNGNKNNSMDK) show a composition bias toward polar residues. Low complexity-rich tracts occupy residues 18–34 (QPQQ…QQQQ) and 96–105 (NTNNNNQNNT). Polar residues predominate over residues 106–140 (SPTFSSANGKQSNLTQRKINTQIQSKQPTNNNVQP). Residues 160 to 177 (QNNNGNNNNNNNNNNNNN) are compositionally biased toward low complexity. Helical transmembrane passes span 217 to 237 (LLLI…HLLY), 254 to 274 (WPGV…YLIE), 306 to 326 (IIAF…ICTF), 399 to 419 (IVEA…YMLP), and 449 to 469 (YVWL…VAEI). The short motif at 477–483 (FYRDWWN) is the FYXDWWN motif element. A run of 3 helical transmembrane segments spans residues 520 to 540 (GYFM…SIPF), 545 to 565 (LWGF…KNLM), and 570 to 590 (LGNV…VLLY). Residue His-532 is part of the active site.

Belongs to the membrane-bound acyltransferase family. Sterol o-acyltransferase subfamily.

Its subcellular location is the endoplasmic reticulum membrane. The enzyme catalyses an acyl-CoA + a 1,2-diacyl-sn-glycerol = a triacyl-sn-glycerol + CoA. The catalysed reaction is all-trans-retinol + an acyl-CoA = an all-trans-retinyl ester + CoA. It catalyses the reaction 2-(9Z-octadecenoyl)-glycerol + (9Z)-octadecenoyl-CoA = 1,2-di-(9Z-octadecenoyl)-sn-glycerol + CoA. It carries out the reaction 1,2-di-(9Z-octadecenoyl)-sn-glycerol + (9Z)-octadecenoyl-CoA = 1,2,3-tri-(9Z-octadecenoyl)-glycerol + CoA. The enzyme catalyses all-trans-retinol + hexadecanoyl-CoA = all-trans-retinyl hexadecanoate + CoA. The catalysed reaction is 1-O-(9Z-octadecenyl)-glycerol + (9Z)-octadecenoyl-CoA = 1-O-(9Z-octadecyl)-3-(9Z-octadecenoyl)-glycerol + CoA. It catalyses the reaction 1-O-(9Z-octadecyl)-3-(9Z-octadecenoyl)-glycerol + (9Z)-octadecenoyl-CoA = 1-O-(9Z-octadecenyl)-2,3-di-(9Z-octadecenoyl)glycerol + CoA. It carries out the reaction 1-(9Z-octadecenoyl)-glycerol + (9Z)-octadecenoyl-CoA = 1,2-di-(9Z-octadecenoyl)-glycerol + CoA. The enzyme catalyses 1,2-di-(9Z-octadecenoyl)-glycerol + (9Z)-octadecenoate + H(+) = 1,2,3-tri-(9Z-octadecenoyl)-glycerol + H2O. The catalysed reaction is 1-octadecanoyl-2-(5Z,8Z,11Z,14Z-eicosatetraenoyl)-sn-glycerol + (9Z)-octadecenoyl-CoA = 1-octadecanoyl-2-(5Z,8Z,11Z,14Z)-eicosatetraenoyl-3-(9Z)-octadecenoyl-sn-glycerol + CoA. It catalyses the reaction hexadecane-1,2-diol + 2 hexadecanoyl-CoA = 1,2-O,O-dihexadecanoyl-1,2-hexadecanediol + 2 CoA. It carries out the reaction hexadecane-1,2-diol + hexadecanoyl-CoA = 2-hydroxyhexadecyl hexadecanoate + CoA. The enzyme catalyses 2-(9Z-octadecenoyl)-glycerol + hexadecanoyl-CoA = 1-hexadecanoyl-2-(9Z-octadecenoyl)-sn-glycerol + CoA. The catalysed reaction is 1,2-di-(9Z-octadecenoyl)-sn-glycerol + hexadecanoyl-CoA = 1,2-di-(9Z)-octadecenoyl-3-hexadecanoyl-sn-glycerol + CoA. It catalyses the reaction hexadecan-1-ol + hexadecanoyl-CoA = hexadecanyl hexadecanoate + CoA. It carries out the reaction 13-cis-retinol + hexadecanoyl-CoA = 13-cis-retinyl hexadecanoate + CoA. The enzyme catalyses 1,3-di-(9Z-octadecenoyl)-glycerol + (9Z)-octadecenoyl-CoA = 1,2,3-tri-(9Z-octadecenoyl)-glycerol + CoA. The catalysed reaction is 2,3-di-(9Z)-octadecenoyl-sn-glycerol + (9Z)-octadecenoyl-CoA = 1,2,3-tri-(9Z-octadecenoyl)-glycerol + CoA. The protein operates within lipid metabolism; glycerolipid metabolism. In terms of biological role, catalyzes the terminal and only committed step in triacylglycerol synthesis by using diacylglycerol and fatty acyl CoA as substrates. The chain is Diacylglycerol O-acyltransferase 1 (dgat1) from Dictyostelium discoideum (Social amoeba).